A 405-amino-acid chain; its full sequence is Elongation factor Tu (405 aa).

The 204-residue stretch at 10–213 (KEHVNVGTIG…AMDEYIPTPE (204 aa)) folds into the tr-type G domain. The tract at residues 19–26 (GHVDHGKS) is G1. 19–26 (GHVDHGKS) lines the GTP pocket. Position 26 (Ser-26) interacts with Mg(2+). Positions 64 to 68 (GITIN) are G2. The interval 85 to 88 (DCPG) is G3. Residues 85–89 (DCPGH) and 140–143 (NKCD) contribute to the GTP site. Positions 140-143 (NKCD) are G4. Positions 178–180 (SAL) are G5.

This sequence belongs to the TRAFAC class translation factor GTPase superfamily. Classic translation factor GTPase family. EF-Tu/EF-1A subfamily. Monomer.

It localises to the cytoplasm. The enzyme catalyses GTP + H2O = GDP + phosphate + H(+). In terms of biological role, GTP hydrolase that promotes the GTP-dependent binding of aminoacyl-tRNA to the A-site of ribosomes during protein biosynthesis. This chain is Elongation factor Tu, found in Aquifex pyrophilus.